The following is a 206-amino-acid chain: Thymidylate kinase (206 aa).

11–18 (GIDGAGKT) contacts ATP.

The protein belongs to the thymidylate kinase family.

The catalysed reaction is dTMP + ATP = dTDP + ADP. Phosphorylation of dTMP to form dTDP in both de novo and salvage pathways of dTTP synthesis. The protein is Thymidylate kinase of Burkholderia cenocepacia (strain HI2424).